Reading from the N-terminus, the 237-residue chain is Large ribosomal subunit protein uL1 (237 aa).

The protein belongs to the universal ribosomal protein uL1 family. In terms of assembly, part of the 50S ribosomal subunit.

Binds directly to 23S rRNA. The L1 stalk is quite mobile in the ribosome, and is involved in E site tRNA release. Functionally, protein L1 is also a translational repressor protein, it controls the translation of the L11 operon by binding to its mRNA. The chain is Large ribosomal subunit protein uL1 from Solibacter usitatus (strain Ellin6076).